Here is a 432-residue protein sequence, read N- to C-terminus: Adenylosuccinate synthetase (432 aa).

GTP-binding positions include glycine 13–lysine 19 and glycine 41–threonine 43. The active-site Proton acceptor is the aspartate 14. The Mg(2+) site is built by aspartate 14 and glycine 41. IMP contacts are provided by residues aspartate 14 to lysine 17, asparagine 39 to histidine 42, threonine 130, arginine 144, glutamine 225, threonine 240, and arginine 304. Histidine 42 functions as the Proton donor in the catalytic mechanism. Alanine 300–arginine 306 contributes to the substrate binding site. GTP-binding positions include arginine 306, lysine 332 to aspartate 334, and serine 415 to glycine 417.

The protein belongs to the adenylosuccinate synthetase family. In terms of assembly, homodimer. It depends on Mg(2+) as a cofactor.

It localises to the cytoplasm. The enzyme catalyses IMP + L-aspartate + GTP = N(6)-(1,2-dicarboxyethyl)-AMP + GDP + phosphate + 2 H(+). It participates in purine metabolism; AMP biosynthesis via de novo pathway; AMP from IMP: step 1/2. In terms of biological role, plays an important role in the de novo pathway of purine nucleotide biosynthesis. Catalyzes the first committed step in the biosynthesis of AMP from IMP. In Shigella sonnei (strain Ss046), this protein is Adenylosuccinate synthetase.